The sequence spans 237 residues: MGTCKYKRVMLKLSGEALAGENGFGIDFNIAMNIAKAVKELVDMGIEVGAVVGGGNIWRGRSGEGMDRTTADYMGMLATSINALALQDSLESLGVDTRVQTAIEMKEIAEPYIRRRAMRHLEKGRVVIFGAGTGNPYFSTDTAAALRAAEIEADVILLAKKVDGVYDKDPHKYDDAKKYDELSYIEVLEQGLQVMDSTATSLCMDNNIPILVFALDNPENIKKVVLGENIGTIVSKK.

12–15 (KLSG) serves as a coordination point for ATP. An involved in allosteric activation by GTP region spans residues 20–25 (GENGFG). Residue G54 coordinates UMP. The ATP site is built by G55 and R59. UMP is bound by residues D72 and 133 to 140 (TGNPYFST). ATP-binding residues include Y166 and D169.

It belongs to the UMP kinase family. In terms of assembly, homohexamer.

Its subcellular location is the cytoplasm. The catalysed reaction is UMP + ATP = UDP + ADP. It functions in the pathway pyrimidine metabolism; CTP biosynthesis via de novo pathway; UDP from UMP (UMPK route): step 1/1. Allosterically activated by GTP. Inhibited by UTP. Its function is as follows. Catalyzes the reversible phosphorylation of UMP to UDP. The protein is Uridylate kinase of Clostridium perfringens (strain SM101 / Type A).